Here is a 117-residue protein sequence, read N- to C-terminus: Large ribosomal subunit protein bL19 (117 aa).

Belongs to the bacterial ribosomal protein bL19 family.

In terms of biological role, this protein is located at the 30S-50S ribosomal subunit interface and may play a role in the structure and function of the aminoacyl-tRNA binding site. This Rhodopirellula baltica (strain DSM 10527 / NCIMB 13988 / SH1) protein is Large ribosomal subunit protein bL19.